The sequence spans 217 residues: 7-cyano-7-deazaguanine synthase (217 aa).

10 to 20 (FSGGQDSTTCL) contributes to the ATP binding site. Zn(2+) is bound by residues C185, C194, C197, and C200.

Belongs to the QueC family. As to quaternary structure, homodimer. Zn(2+) is required as a cofactor.

It carries out the reaction 7-carboxy-7-deazaguanine + NH4(+) + ATP = 7-cyano-7-deazaguanine + ADP + phosphate + H2O + H(+). The protein operates within purine metabolism; 7-cyano-7-deazaguanine biosynthesis. In terms of biological role, catalyzes the ATP-dependent conversion of 7-carboxy-7-deazaguanine (CDG) to 7-cyano-7-deazaguanine (preQ(0)). The chain is 7-cyano-7-deazaguanine synthase from Streptococcus thermophilus (strain CNRZ 1066).